A 656-amino-acid polypeptide reads, in one-letter code: Squalene-hopene cyclase (656 aa).

The stretch at 68–110 (EQKIANYLRRCQSREHWGWPVYYGGEFNISASVQAYFALKMTG) is one PFTB 1 repeat. Aspartate 396 acts as the Proton donor in catalysis. PFTB repeat units follow at residues 417–459 (LDRA…ALLD), 485–525 (IERG…NASG), 533–582 (VLKC…GLMA), and 591–634 (VKRG…QFFP).

The protein belongs to the terpene cyclase/mutase family.

The catalysed reaction is squalene = hop-22(29)-ene. The enzyme catalyses squalene + H2O = hopan-22-ol. Functionally, squalene cyclase that catalyzes the oxygen-independent cyclization of squalene into hopanoids, a class of cyclic triterpenoids including hop-22(29)-ene, hop-17(21)-ene, hop-21(22)-ene, and hopan-22-ol. The sequence is that of Squalene-hopene cyclase from Schizosaccharomyces japonicus (strain yFS275 / FY16936) (Fission yeast).